Reading from the N-terminus, the 169-residue chain is Large ribosomal subunit protein uL5 (169 aa).

Belongs to the universal ribosomal protein uL5 family. As to quaternary structure, part of the 50S ribosomal subunit; contacts the 5S rRNA and probably tRNA. Forms a bridge to the 30S subunit in the 70S ribosome.

Its function is as follows. This is one of the proteins that bind and probably mediate the attachment of the 5S RNA into the large ribosomal subunit, where it forms part of the central protuberance. In the 70S ribosome it contacts protein S13 of the 30S subunit (bridge B1b), connecting the 2 subunits; this bridge is implicated in subunit movement. May contact the P site tRNA; the 5S rRNA and some of its associated proteins might help stabilize positioning of ribosome-bound tRNAs. This Nanoarchaeum equitans (strain Kin4-M) protein is Large ribosomal subunit protein uL5.